A 1108-amino-acid polypeptide reads, in one-letter code: Activity-dependent neuroprotector homeobox protein (1108 aa).

The interval 1–685 is binds to beta-catenin/CTNNB1; the sequence is MFQLPVNNLG…ASTITLHLVH (685 aa). Glycyl lysine isopeptide (Lys-Gly) (interchain with G-Cter in SUMO2) cross-links involve residues K39 and K72. A C2H2-type 1; degenerate zinc finger spans residues 74 to 97; it reads FCCSACPFSSKFFSAYKSHFRNVH. Position 98 is a phosphoserine (S98). The segment at 107-129 adopts a C2H2-type 2; degenerate zinc-finger fold; sequence LNCPYCTFNADKKTLETHIKIFH. Residues 133-154 are disordered; that stretch reads SSAPSSSLSTFKDKNKNDGLKP. Positions 143–154 are enriched in basic and acidic residues; the sequence is FKDKNKNDGLKP. Glycyl lysine isopeptide (Lys-Gly) (interchain with G-Cter in SUMO2) cross-links involve residues K144 and K155. The C2H2-type 3; degenerate zinc-finger motif lies at 165-188; it reads YYCKKCTYRDPLYEIVRKHIYREH. Residues K203, K231, K266, K274, K278, K279, K311, and K335 each participate in a glycyl lysine isopeptide (Lys-Gly) (interchain with G-Cter in SUMO2) cross-link. The C2H2-type 4; degenerate zinc finger occupies 221 to 244; the sequence is IHCKRCLFMPKSYEALVQHVIEDH. The residue at position 348 (R348) is an Asymmetric dimethylarginine. Positions 354-361 are neuroprotective peptide; contributes to CTNNB1-binding, but less effective than whole N-terminal region; it reads NAPVSIPQ. The segment at 360 to 438 is disordered; it reads PQQSQSVKQL…PAATGPPPSN (79 aa). Glycyl lysine isopeptide (Lys-Gly) (interchain with G-Cter in SUMO2) cross-links involve residues K367 and K407. Positions 393–422 are enriched in polar residues; the sequence is SLQTANTSLPPGQVKSPSVSQSQASRVLGQ. A phosphoserine mark is found at S408 and S412. A Glycyl lysine isopeptide (Lys-Gly) (interchain with G-Cter in SUMO2) cross-link involves residue K426. Pro residues predominate over residues 426 to 437; sequence KPPPAATGPPPS. The C2H2-type 5; atypical zinc-finger motif lies at 446 to 468; it reads KICTICNELFPENVYSVHFEKEH. 2 consecutive C2H2-type zinc fingers follow at residues 488 to 509 and 511 to 534; these read SKCL…MLIH and LSCP…RMVH. Residues K599 and K605 each participate in a glycyl lysine isopeptide (Lys-Gly) (interchain with G-Cter in SUMO2) cross-link. The residue at position 607 (S607) is a Phosphoserine. Glycyl lysine isopeptide (Lys-Gly) (interchain with G-Cter in SUMO2) cross-links involve residues K615, K620, K631, and K657. The C2H2-type 8; atypical zinc-finger motif lies at 621-646; the sequence is TLCPLCFSILKGPISDALAHHLRERH. The segment at 661–685 adopts a C2H2-type 9; atypical zinc-finger fold; it reads YKCIHCLGVYTSNMTASTITLHLVH. The segment at 690–711 is disordered; it reads GKTQNGQDKTNAPSRLNQSPGL. Positions 691-709 are enriched in polar residues; it reads KTQNGQDKTNAPSRLNQSP. K698 participates in a covalent cross-link: Glycyl lysine isopeptide (Lys-Gly) (interchain with G-Cter in SUMO2). Phosphoserine is present on S708. Residues K715, K727, and K730 each participate in a glycyl lysine isopeptide (Lys-Gly) (interchain with G-Cter in SUMO2) cross-link. S737 carries the phosphoserine modification. K744 participates in a covalent cross-link: Glycyl lysine isopeptide (Lys-Gly) (interchain with G-Cter in SUMO2). Positions 753–813 form a DNA-binding region, homeobox; sequence LDPKGHEDDS…SNKRKKCVRD (61 aa). S804 is subject to Phosphoserine. Residues K806, K828, and K834 each participate in a glycyl lysine isopeptide (Lys-Gly) (interchain with G-Cter in SUMO2) cross-link. The span at 851 to 880 shows a compositional bias: basic and acidic residues; it reads KDSRVNASKTVDKKHNLGKEDDSFSDSFEH. Residues 851–1037 are disordered; it reads KDSRVNASKT…DTEQLKWKNS (187 aa). A phosphoserine mark is found at S875, S877, S885, S888, and S904. Residues K913, K928, and K941 each participate in a glycyl lysine isopeptide (Lys-Gly) (interchain with G-Cter in SUMO2) cross-link. Residues 928 to 938 are compositionally biased toward acidic residues; it reads KEEEEEEEEED. Over residues 939 to 959 the composition is skewed to basic and acidic residues; the sequence is GSKYETIHLTEEPAKLMHDAS. Phosphoserine occurs at positions 959 and 961. The segment covering 977-988 has biased composition (polar residues); the sequence is PSESGPGSQQIS. K1022 is covalently cross-linked (Glycyl lysine isopeptide (Lys-Gly) (interchain with G-Cter in SUMO2)). N6-acetyllysine; alternate occurs at positions 1041 and 1048. Residues K1041 and K1048 each participate in a glycyl lysine isopeptide (Lys-Gly) (interchain with G-Cter in SUMO2); alternate cross-link. The interval 1050-1108 is disordered; the sequence is QSQWENASENAERLPNPQIEWQNSTIDSEDGEQFDSMTDGVADPMHGSLTGVKLSSQQA. S1077 is subject to Phosphoserine.

Interacts (via N-terminal region) with beta-catenin/CTNNB1 (via the central armadillo domains); interaction is direct and stabilizes CTNNB1 by modulating its phosphorylation by glycogen synthase kinase-3 beta GSK3B. In terms of tissue distribution, expressed in the brain, with a higher expression in cerebellum and hippocampus. Weakly expressed in lung, kidney and intestine, and expressed at intermediate level in testis.

It is found in the nucleus. It localises to the chromosome. In terms of biological role, may be involved in transcriptional regulation. May mediate some of the neuroprotective peptide VIP-associated effects involving normal growth and cancer proliferation. Positively modulates WNT-beta-catenin/CTNN1B signaling, acting by regulating phosphorylation of, and thereby stabilizing, CTNNB1. May be required for neural induction and neuronal differentiation. May be involved in erythroid differentiation. The chain is Activity-dependent neuroprotector homeobox protein (Adnp) from Mus musculus (Mouse).